Here is a 104-residue protein sequence, read N- to C-terminus: Thioredoxin (104 aa).

A Thioredoxin domain is found at 2 to 104 (AIVKVTDSNF…NLAEVIEKHL (103 aa)). A disulfide bridge connects residues Cys29 and Cys32.

Belongs to the thioredoxin family.

In terms of biological role, component of the thioredoxin-thioredoxin reductase system. Participates in various redox reactions through the reversible oxidation of its active center dithiol to a disulfide and catalyzes dithiol-disulfide exchange reactions. The sequence is that of Thioredoxin (trxA) from Staphylococcus saprophyticus subsp. saprophyticus (strain ATCC 15305 / DSM 20229 / NCIMB 8711 / NCTC 7292 / S-41).